A 248-amino-acid chain; its full sequence is Cell division protein ZapD (248 aa).

It belongs to the ZapD family. As to quaternary structure, interacts with FtsZ.

It localises to the cytoplasm. Its function is as follows. Cell division factor that enhances FtsZ-ring assembly. Directly interacts with FtsZ and promotes bundling of FtsZ protofilaments, with a reduction in FtsZ GTPase activity. The chain is Cell division protein ZapD from Aliivibrio fischeri (strain ATCC 700601 / ES114) (Vibrio fischeri).